A 220-amino-acid chain; its full sequence is MNVKIEQSWRKYLVPEFEKPYFKQLVEFIKNEYASKIIYPKGNKIFSAFDKTPLDRVKVVILGQDPYHEPGQANGLCFSVNEGIPLPPSLQNIYKEVKDDIGIVSSTSGNLERWSEQGVLLLNATLTVQAHKAGSHQKKGWEKFTDAIIHIILKEKQHIVFILWGTYAQKKGAFIPSDKHLILKSAHPSPFSANKGFFGSKPFSKTNDYLKKTGQTVITW.

The active-site Proton acceptor is the D65.

This sequence belongs to the uracil-DNA glycosylase (UDG) superfamily. UNG family.

The protein localises to the cytoplasm. The enzyme catalyses Hydrolyzes single-stranded DNA or mismatched double-stranded DNA and polynucleotides, releasing free uracil.. In terms of biological role, excises uracil residues from the DNA which can arise as a result of misincorporation of dUMP residues by DNA polymerase or due to deamination of cytosine. In Azobacteroides pseudotrichonymphae genomovar. CFP2, this protein is Uracil-DNA glycosylase.